The sequence spans 178 residues: Protein-export protein SecB (178 aa).

Positions 1–13 are enriched in acidic residues; that stretch reads MADEGDVLTDLDM. The tract at residues 1-25 is disordered; that stretch reads MADEGDVLTDLDMDPAAGGNGADNR.

It belongs to the SecB family. Homotetramer, a dimer of dimers. One homotetramer interacts with 1 SecA dimer.

The protein resides in the cytoplasm. Functionally, one of the proteins required for the normal export of preproteins out of the cell cytoplasm. It is a molecular chaperone that binds to a subset of precursor proteins, maintaining them in a translocation-competent state. It also specifically binds to its receptor SecA. The protein is Protein-export protein SecB of Erythrobacter litoralis (strain HTCC2594).